A 334-amino-acid polypeptide reads, in one-letter code: NADH-ubiquinone oxidoreductase chain 1 (334 aa).

The next 9 helical transmembrane spans lie at 4-24, 82-102, 115-135, 161-181, 187-207, 222-242, 247-267, 268-288, and 311-331; these read FVFLMIIETIHIILKILIIVI, FIYVAAPVLSFTLALIAWGVI, IGILFTLAVSSISVYAILMSG, IGLIIITVILCVGSLNITEIV, GIWFFFPLFPVAMMFFASALA, ELVSGYNVEYASMSFALFFLA, IILMSCLTTILFLGGWLSPIV, FFKGGPAWFGLKTSFIILLFI, and LPLSLAFVVLVASLLFGLNGL.

Belongs to the complex I subunit 1 family.

Its subcellular location is the mitochondrion inner membrane. It carries out the reaction a ubiquinone + NADH + 5 H(+)(in) = a ubiquinol + NAD(+) + 4 H(+)(out). Functionally, core subunit of the mitochondrial membrane respiratory chain NADH dehydrogenase (Complex I) that is believed to belong to the minimal assembly required for catalysis. Complex I functions in the transfer of electrons from NADH to the respiratory chain. The immediate electron acceptor for the enzyme is believed to be ubiquinone. This Metridium senile (Brown sea anemone) protein is NADH-ubiquinone oxidoreductase chain 1 (ND1).